The following is a 1067-amino-acid chain: FHIP family protein GL19323 (1067 aa).

Residues 1 to 11 (MSWLRSSPLRQ) show a composition bias toward polar residues. 3 disordered regions span residues 1–31 (MSWL…GSLR), 503–525 (LARP…QPIQ), and 832–1013 (NENS…SEPA). A phosphoserine mark is found at serine 508 and serine 835. The span at 842–858 (QPQTTLSQQQQQQQGQQ) shows a compositional bias: low complexity. A compositionally biased stretch (polar residues) spans 859–878 (RSAYATLSAATPVQATQTSA). The segment covering 893–904 (SKSISSMFSRRS) has biased composition (low complexity). Over residues 918–949 (LVGNNNSGSGQSQPFSSTGTGTCETSLSTNPQ) the composition is skewed to polar residues. Residues 950-979 (SGAAAARSTGTATTANGNSSNSNISIGGST) are compositionally biased toward low complexity. A compositionally biased stretch (polar residues) spans 980–996 (QTLSGHSNTTTYSSSTL).

It belongs to the FHIP family.

This is FHIP family protein GL19323 from Drosophila persimilis (Fruit fly).